The primary structure comprises 559 residues: Sesquiterpene synthase (559 aa).

D312, D316, and E464 together coordinate Mg(2+). The DDXXD motif signature appears at 312-316 (DDIYD).

Belongs to the terpene synthase family. Tpsa subfamily. The cofactor is Mg(2+). Mn(2+) serves as cofactor.

In terms of biological role, catalyzes alpha-humulene and delta-cadinene, as well as beta-elemene, the thermal rearrangement product of germacrene A and several other bicyclic sesquiterpenes when incubated with (2E,6E)-farnesyl diphosphate. This Santalum austrocaledonicum (Sandalwood) protein is Sesquiterpene synthase.